The primary structure comprises 64 residues: Conotoxin Tx3.5-a (64 aa).

Positions 1–19 (MSKLGVLLTICLLLFPLTA) are cleaved as a signal peptide. Positions 20–47 (LPLDGDQPADQAAERMQAEQHPLFDQKR) are excised as a propeptide. 3 cysteine pairs are disulfide-bonded: Cys49–Cys58, Cys50–Cys62, and Cys54–Cys63. Cys63 carries the post-translational modification Cysteine amide.

The protein belongs to the conotoxin M superfamily. Post-translationally, contains 3 disulfide bonds. In terms of processing, two peptides are produced from this precursor. Conotoxin Tx3.5-b is amidated at Cys-63, conotoxin Tx3.5-a has an unmodified C-terminus. As to expression, expressed by the venom duct. Is present in all duct parts with a highest content in part 2 (proximal of the venom bulb) and then decreases in concentration toward the end of the duct.

The protein localises to the secreted. In Conus textile (Cloth-of-gold cone), this protein is Conotoxin Tx3.5-a.